We begin with the raw amino-acid sequence, 793 residues long: Putative dipeptidyl aminopeptidase C2E11.08 (793 aa).

The Cytoplasmic portion of the chain corresponds to 1–24 (MNDFSFEDKGLISRSGFGSRHVRR). Residues 25–45 (VVKALALIFSLLILYLTISNV) traverse the membrane as a helical; Signal-anchor for type II membrane protein segment. The Lumenal segment spans residues 46–793 (SDSPPKRDSL…STGVRQHRWD (748 aa)). 11 N-linked (GlcNAc...) asparagine glycosylation sites follow: Asn-101, Asn-136, Asn-246, Asn-299, Asn-303, Asn-324, Asn-336, Asn-377, Asn-384, Asn-407, and Asn-535. Residues Ser-647, Asp-722, and His-755 each act as charge relay system in the active site. N-linked (GlcNAc...) asparagine glycosylation occurs at Asn-761.

This sequence belongs to the peptidase S9B family.

It is found in the vacuole membrane. The polypeptide is Putative dipeptidyl aminopeptidase C2E11.08 (Schizosaccharomyces pombe (strain 972 / ATCC 24843) (Fission yeast)).